The following is a 128-amino-acid chain: Fluoride-specific ion channel FluC 2 (128 aa).

Helical transmembrane passes span 13–35 (ALVA…AIAG), 40–59 (LAAN…EAAA), 71–93 (LLGT…TAGL), and 97–119 (WMAA…GRAI).

This sequence belongs to the fluoride channel Fluc/FEX (TC 1.A.43) family.

The protein resides in the cell membrane. It carries out the reaction fluoride(in) = fluoride(out). Fluoride-specific ion channel. Important for reducing fluoride concentration in the cell, thus reducing its toxicity. The sequence is that of Fluoride-specific ion channel FluC 2 from Halobacterium salinarum (strain ATCC 700922 / JCM 11081 / NRC-1) (Halobacterium halobium).